Consider the following 325-residue polypeptide: Large ribosomal subunit protein uL18 (325 aa).

The segment at 247–300 (IRIPPSRRNPRRRSPRSGGRWPSCRSPPARRRSRSTRPTSWPRSRPTSKPKRPR) is disordered. 2 stretches are compositionally biased toward low complexity: residues 262–273 (RSGGRWPSCRSP) and 282–291 (TRPTSWPRSR).

It belongs to the universal ribosomal protein uL18 family. As to quaternary structure, component of the large ribosomal subunit (LSU).

It is found in the cytoplasm. The protein resides in the nucleus. In terms of biological role, component of the ribosome, a large ribonucleoprotein complex responsible for the synthesis of proteins in the cell. The small ribosomal subunit (SSU) binds messenger RNAs (mRNAs) and translates the encoded message by selecting cognate aminoacyl-transfer RNA (tRNA) molecules. The large subunit (LSU) contains the ribosomal catalytic site termed the peptidyl transferase center (PTC), which catalyzes the formation of peptide bonds, thereby polymerizing the amino acids delivered by tRNAs into a polypeptide chain. The nascent polypeptides leave the ribosome through a tunnel in the LSU and interact with protein factors that function in enzymatic processing, targeting, and the membrane insertion of nascent chains at the exit of the ribosomal tunnel. The chain is Large ribosomal subunit protein uL18 (RpL5) from Anopheles gambiae (African malaria mosquito).